The primary structure comprises 1227 residues: Protein U7 (1227 aa).

Belongs to the herpesviridae US22 family.

This is Protein U7 (U7/U5) from Homo sapiens (Human).